The primary structure comprises 174 residues: Transcriptional repressor NrdR (174 aa).

A zinc finger spans residues 3-34 (CPFCQHSDTRVIDSRVSEDGTTIRRRRECEAC). Residues 49 to 139 (PTVVKSDGGR…VYRSFQDVAD (91 aa)) form the ATP-cone domain.

Belongs to the NrdR family. It depends on Zn(2+) as a cofactor.

In terms of biological role, negatively regulates transcription of bacterial ribonucleotide reductase nrd genes and operons by binding to NrdR-boxes. The sequence is that of Transcriptional repressor NrdR from Xanthomonas oryzae pv. oryzae (strain MAFF 311018).